A 558-amino-acid chain; its full sequence is Aspartate--tRNA ligase 2, cytoplasmic (558 aa).

Over residues 1–18 the composition is skewed to low complexity; the sequence is MSSESEIPPLSSSTAAAE. The tract at residues 1-57 is disordered; the sequence is MSSESEIPPLSSSTAAAEESGEKTSKKAAKKEAAKLEKLRRRQEQEEATRRTASISL. Serine 2 is modified (N-acetylserine). Residues 20-50 show a composition bias toward basic and acidic residues; the sequence is SGEKTSKKAAKKEAAKLEKLRRRQEQEEATR. Residues 110-195 constitute a DNA-binding region (OB); it reads VLIRGRVHTN…QVEIQVRKVY (86 aa). Glutamate 286 contacts L-aspartate. The segment at 308-311 is aspartate; the sequence is QLHK. Residue arginine 330 coordinates L-aspartate. ATP is bound by residues 330-332, 338-340, and glutamate 481; these read RAE and RHL. Mg(2+)-binding residues include glutamate 481 and serine 484. The L-aspartate site is built by serine 484 and arginine 488. 529 to 532 contributes to the ATP binding site; sequence GLER.

Belongs to the class-II aminoacyl-tRNA synthetase family. Type 2 subfamily.

It is found in the cytoplasm. The protein resides in the cytosol. It localises to the endoplasmic reticulum. The catalysed reaction is tRNA(Asp) + L-aspartate + ATP = L-aspartyl-tRNA(Asp) + AMP + diphosphate. Functionally, catalyzes the specific attachment of an amino acid to its cognate tRNA in a 2 step reaction: the amino acid (AA) is first activated by ATP to form AA-AMP and then transferred to the acceptor end of the tRNA. Involved in the perception of beta-aminobutyric acid (BABA) and required for BABA priming effect in disease resistance. The polypeptide is Aspartate--tRNA ligase 2, cytoplasmic (Arabidopsis thaliana (Mouse-ear cress)).